The primary structure comprises 176 residues: ATP-dependent protease subunit HslV (176 aa).

Residue Thr-2 is part of the active site. The Na(+) site is built by Gly-157, Cys-160, and Thr-163.

Belongs to the peptidase T1B family. HslV subfamily. A double ring-shaped homohexamer of HslV is capped on each side by a ring-shaped HslU homohexamer. The assembly of the HslU/HslV complex is dependent on binding of ATP.

The protein localises to the cytoplasm. It carries out the reaction ATP-dependent cleavage of peptide bonds with broad specificity.. Allosterically activated by HslU binding. In terms of biological role, protease subunit of a proteasome-like degradation complex believed to be a general protein degrading machinery. This Klebsiella pneumoniae (strain 342) protein is ATP-dependent protease subunit HslV.